We begin with the raw amino-acid sequence, 334 residues long: GTP 3',8-cyclase (334 aa).

The Radical SAM core domain occupies R13–A239. R22 contacts GTP. Residues C29 and C33 each contribute to the [4Fe-4S] cluster site. Residue Y35 coordinates S-adenosyl-L-methionine. Residue C36 coordinates [4Fe-4S] cluster. R73 lines the GTP pocket. G77 contributes to the S-adenosyl-L-methionine binding site. T104 contacts GTP. Residue S128 participates in S-adenosyl-L-methionine binding. K165 provides a ligand contact to GTP. S-adenosyl-L-methionine is bound at residue M199. Residues C262 and C265 each coordinate [4Fe-4S] cluster. Residue R267 to R269 participates in GTP binding. C279 provides a ligand contact to [4Fe-4S] cluster.

It belongs to the radical SAM superfamily. MoaA family. Monomer and homodimer. Requires [4Fe-4S] cluster as cofactor.

The enzyme catalyses GTP + AH2 + S-adenosyl-L-methionine = (8S)-3',8-cyclo-7,8-dihydroguanosine 5'-triphosphate + 5'-deoxyadenosine + L-methionine + A + H(+). The protein operates within cofactor biosynthesis; molybdopterin biosynthesis. Functionally, catalyzes the cyclization of GTP to (8S)-3',8-cyclo-7,8-dihydroguanosine 5'-triphosphate. The protein is GTP 3',8-cyclase of Vibrio cholerae serotype O1 (strain M66-2).